A 103-amino-acid chain; its full sequence is MKVVVMGDSDTVTGFRLAGVHEAYEFDFSELSIERARNKLKELVERDDVGIILITERLAQRIGDLPQVNLPIILQIPDKFGSIYGEELLREIVRKAVGIEIKR.

Belongs to the V-ATPase F subunit family. Has multiple subunits with at least A(3), B(3), C, D, E, F, H, I and proteolipid K(x).

The protein resides in the cell membrane. Component of the A-type ATP synthase that produces ATP from ADP in the presence of a proton gradient across the membrane. The chain is A-type ATP synthase subunit F from Pyrococcus abyssi (strain GE5 / Orsay).